Consider the following 170-residue polypeptide: Ureidoglycolate lyase (170 aa).

It belongs to the ureidoglycolate lyase family. In terms of assembly, homodimer. It depends on Ni(2+) as a cofactor.

It catalyses the reaction (S)-ureidoglycolate = urea + glyoxylate. It functions in the pathway nitrogen metabolism; (S)-allantoin degradation. Its function is as follows. Catalyzes the catabolism of the allantoin degradation intermediate (S)-ureidoglycolate, generating urea and glyoxylate. Involved in the utilization of allantoin as nitrogen source. In Pseudomonas savastanoi pv. phaseolicola (strain 1448A / Race 6) (Pseudomonas syringae pv. phaseolicola (strain 1448A / Race 6)), this protein is Ureidoglycolate lyase.